We begin with the raw amino-acid sequence, 257 residues long: Thiazole synthase (257 aa).

Lysine 98 acts as the Schiff-base intermediate with DXP in catalysis. 1-deoxy-D-xylulose 5-phosphate-binding positions include glycine 159, 185-186, and 207-208; these read AG and NT.

The protein belongs to the ThiG family. Homotetramer. Forms heterodimers with either ThiH or ThiS.

It is found in the cytoplasm. It carries out the reaction [ThiS sulfur-carrier protein]-C-terminal-Gly-aminoethanethioate + 2-iminoacetate + 1-deoxy-D-xylulose 5-phosphate = [ThiS sulfur-carrier protein]-C-terminal Gly-Gly + 2-[(2R,5Z)-2-carboxy-4-methylthiazol-5(2H)-ylidene]ethyl phosphate + 2 H2O + H(+). Its pathway is cofactor biosynthesis; thiamine diphosphate biosynthesis. Catalyzes the rearrangement of 1-deoxy-D-xylulose 5-phosphate (DXP) to produce the thiazole phosphate moiety of thiamine. Sulfur is provided by the thiocarboxylate moiety of the carrier protein ThiS. In vitro, sulfur can be provided by H(2)S. This chain is Thiazole synthase, found in Anaeromyxobacter dehalogenans (strain 2CP-C).